A 287-amino-acid polypeptide reads, in one-letter code: Methylamine utilization ferredoxin-type protein MauN (287 aa).

4Fe-4S ferredoxin-type domains follow at residues 218-248 (RVAA…PALK) and 251-280 (GSTL…MTMR). Residues Cys-227, Cys-230, Cys-233, Cys-237, Cys-260, Cys-263, Cys-266, and Cys-270 each contribute to the [4Fe-4S] cluster site.

It participates in one-carbon metabolism; methylamine degradation. Involved in electron transfer. The chain is Methylamine utilization ferredoxin-type protein MauN (mauN) from Methylorubrum extorquens (strain ATCC 14718 / DSM 1338 / JCM 2805 / NCIMB 9133 / AM1) (Methylobacterium extorquens).